The chain runs to 838 residues: Collagen alpha-2(I) chain (838 aa).

The segment at 1-838 (GPMGIMGPRG…GTVGPAGIRS (838 aa)) is disordered. Low complexity predominate over residues 11-38 (FQGPAGEPGEPGQTGPAGARGPAGPPGK). A compositionally biased stretch (basic and acidic residues) spans 39–53 (AGEDGHPGKPGRPGE). 4 stretches are compositionally biased toward low complexity: residues 101–122 (SRGSDGSVGPVGPAGPIGSAGP), 137–147 (PVGNTGPAGPA), 215–236 (NGESGSSGPTGPPGIRGSRGIP), and 329–344 (AGNRGAPGPDGNNGAQ). Gly residues predominate over residues 351-360 (GVQGGKGEQG). Composition is skewed to low complexity over residues 407-424 (PGESGAAGPSGPIGSRGP) and 436-446 (EPGVVGAPGTA). The span at 447–456 (GPAGSGGIPG) shows a compositional bias: gly residues. Composition is skewed to low complexity over residues 479-523 (VGTT…PRGT), 530-550 (VGPAGPNGFAGPAGAAGQPGA), and 568-581 (SAGPAGPDGTPGPA). Positions 582–591 (GSRGDGGPPG) are enriched in gly residues. Residues 593–602 (TGFPGAAGRT) show a composition bias toward low complexity. Gly residues predominate over residues 633–642 (GETGAGGPPG). The segment covering 649–689 (TAGPQGIIGAPGIIGIPGSRGIPGVSGSVGEPGPIGISGPP) has biased composition (low complexity). Residues 693-702 (GPSGGVGNPG) show a composition bias toward gly residues. Composition is skewed to low complexity over residues 703–718 (VNGAPGEAGRDGNPGN), 736–758 (YAGNPGPVGAAGAPGPHGSVGPA), and 766–781 (EPGPVGSVGPVGAIGP).

This sequence belongs to the fibrillar collagen family. In terms of assembly, trimers of one alpha 2(I) and two alpha 1(I) chains. Interacts (via C-terminus) with TMEM131 (via PapD-L domain); the interaction is direct and is involved in assembly and TRAPPIII ER-to-Golgi transport complex-dependent secretion of collagen. Prolines at the third position of the tripeptide repeating unit (G-X-Y) are hydroxylated in some or all of the chains. Forms the fibrils of tendon, ligaments and bones. In bones, the fibrils are mineralized with calcium hydroxyapatite.

It localises to the secreted. It is found in the extracellular space. The protein resides in the extracellular matrix. Functionally, type I collagen is a member of group I collagen (fibrillar forming collagen). This chain is Collagen alpha-2(I) chain, found in Cyclopes didactylus (Silky anteater).